Reading from the N-terminus, the 260-residue chain is Serine hydroxymethyltransferase (260 aa).

K60 is modified (N6-(pyridoxal phosphate)lysine).

Belongs to the SHMT family. In terms of assembly, homodimer. Pyridoxal 5'-phosphate serves as cofactor.

It localises to the cytoplasm. It catalyses the reaction (6R)-5,10-methylene-5,6,7,8-tetrahydrofolate + glycine + H2O = (6S)-5,6,7,8-tetrahydrofolate + L-serine. Its pathway is one-carbon metabolism; tetrahydrofolate interconversion. It functions in the pathway amino-acid biosynthesis; glycine biosynthesis; glycine from L-serine: step 1/1. Its function is as follows. Catalyzes the reversible interconversion of serine and glycine with tetrahydrofolate (THF) serving as the one-carbon carrier. This reaction serves as the major source of one-carbon groups required for the biosynthesis of purines, thymidylate, methionine, and other important biomolecules. Also exhibits THF-independent aldolase activity toward beta-hydroxyamino acids, producing glycine and aldehydes, via a retro-aldol mechanism. This chain is Serine hydroxymethyltransferase, found in Corynebacterium sp. (strain P-1).